The sequence spans 70 residues: DNA gyrase inhibitor YacG (70 aa).

Zn(2+)-binding residues include Cys-7, Cys-10, Cys-26, and Cys-30.

Belongs to the DNA gyrase inhibitor YacG family. As to quaternary structure, interacts with GyrB. It depends on Zn(2+) as a cofactor.

Its function is as follows. Inhibits all the catalytic activities of DNA gyrase by preventing its interaction with DNA. Acts by binding directly to the C-terminal domain of GyrB, which probably disrupts DNA binding by the gyrase. This chain is DNA gyrase inhibitor YacG, found in Shewanella woodyi (strain ATCC 51908 / MS32).